The sequence spans 268 residues: NAC domain-containing protein 41 (268 aa).

The NAC domain occupies 15–160; the sequence is LPPGFRFHPT…NWVLCRVFLK (146 aa). Residues 109 to 166 mediate DNA binding; it reads VGMKKTLVFYKGKPPNGTRTNWVLHEYRLVDSQQDSLYGQNMNWVLCRVFLKKRSNSN. The segment at 166 to 190 is disordered; that stretch reads NSKRKEDEKEEVENEKETETERERE. Positions 180–190 are enriched in basic and acidic residues; the sequence is EKETETERERE.

The protein resides in the nucleus. Functionally, transcription activator of the mannan synthase CSLA9. Recognizes and binds to DNA-specific sequence of CSLA9 promoter. This is NAC domain-containing protein 41 from Arabidopsis thaliana (Mouse-ear cress).